We begin with the raw amino-acid sequence, 54 residues long: UPF0391 membrane protein Mpe_A2904 (54 aa).

2 helical membrane passes run 5 to 25 and 30 to 50; these read AVVF…GIAA and IAKI…LFGL.

Belongs to the UPF0391 family.

It localises to the cell membrane. The protein is UPF0391 membrane protein Mpe_A2904 of Methylibium petroleiphilum (strain ATCC BAA-1232 / LMG 22953 / PM1).